The following is a 434-amino-acid chain: Trigger factor (434 aa).

Positions 160–245 (GDKVKMNFVG…LTEVQAANLP (86 aa)) constitute a PPIase FKBP-type domain.

This sequence belongs to the FKBP-type PPIase family. Tig subfamily.

The protein resides in the cytoplasm. It catalyses the reaction [protein]-peptidylproline (omega=180) = [protein]-peptidylproline (omega=0). In terms of biological role, involved in protein export. Acts as a chaperone by maintaining the newly synthesized protein in an open conformation. Functions as a peptidyl-prolyl cis-trans isomerase. This is Trigger factor from Shewanella putrefaciens (strain CN-32 / ATCC BAA-453).